Consider the following 144-residue polypeptide: Large ribosomal subunit protein uL15 (144 aa).

Residues 1-53 form a disordered region; sequence MRLNTLSPAVGAKSAPKRVGRGIGSGLGKTAGRGHKGQKSRSGGGVRPGFEGG. Gly residues-rich tracts occupy residues 21–31 and 42–52; these read RGIGSGLGKTA and SGGGVRPGFEG.

The protein belongs to the universal ribosomal protein uL15 family. Part of the 50S ribosomal subunit.

Binds to the 23S rRNA. The chain is Large ribosomal subunit protein uL15 from Shewanella amazonensis (strain ATCC BAA-1098 / SB2B).